We begin with the raw amino-acid sequence, 296 residues long: Nitrogenase iron protein 2 (296 aa).

Residue 11 to 18 (GKGGIGKS) coordinates ATP. Residue Cys99 participates in [4Fe-4S] cluster binding. Position 102 is an ADP-ribosylarginine; by dinitrogenase reductase ADP-ribosyltransferase (Arg102). Cys133 is a [4Fe-4S] cluster binding site.

This sequence belongs to the NifH/BchL/ChlL family. In terms of assembly, homodimer. [4Fe-4S] cluster is required as a cofactor. Post-translationally, the reversible ADP-ribosylation of Arg-102 inactivates the nitrogenase reductase and regulates nitrogenase activity.

The enzyme catalyses N2 + 8 reduced [2Fe-2S]-[ferredoxin] + 16 ATP + 16 H2O = H2 + 8 oxidized [2Fe-2S]-[ferredoxin] + 2 NH4(+) + 16 ADP + 16 phosphate + 6 H(+). Functionally, the key enzymatic reactions in nitrogen fixation are catalyzed by the nitrogenase complex, which has 2 components: the iron protein and the molybdenum-iron protein. This chain is Nitrogenase iron protein 2 (nifH2), found in Azorhizobium caulinodans (strain ATCC 43989 / DSM 5975 / JCM 20966 / LMG 6465 / NBRC 14845 / NCIMB 13405 / ORS 571).